A 406-amino-acid polypeptide reads, in one-letter code: Phosphopentomutase (406 aa).

Residues aspartate 10, aspartate 305, histidine 310, aspartate 346, histidine 347, and histidine 358 each coordinate Mn(2+).

It belongs to the phosphopentomutase family. Requires Mn(2+) as cofactor.

It localises to the cytoplasm. It catalyses the reaction 2-deoxy-alpha-D-ribose 1-phosphate = 2-deoxy-D-ribose 5-phosphate. The enzyme catalyses alpha-D-ribose 1-phosphate = D-ribose 5-phosphate. It participates in carbohydrate degradation; 2-deoxy-D-ribose 1-phosphate degradation; D-glyceraldehyde 3-phosphate and acetaldehyde from 2-deoxy-alpha-D-ribose 1-phosphate: step 1/2. Its function is as follows. Isomerase that catalyzes the conversion of deoxy-ribose 1-phosphate (dRib-1-P) and ribose 1-phosphate (Rib-1-P) to deoxy-ribose 5-phosphate (dRib-5-P) and ribose 5-phosphate (Rib-5-P), respectively. The sequence is that of Phosphopentomutase from Rhizobium meliloti (strain 1021) (Ensifer meliloti).